We begin with the raw amino-acid sequence, 328 residues long: Phosphate acyltransferase (328 aa).

The protein belongs to the PlsX family. As to quaternary structure, homodimer. Probably interacts with PlsY.

It localises to the cytoplasm. It catalyses the reaction a fatty acyl-[ACP] + phosphate = an acyl phosphate + holo-[ACP]. It functions in the pathway lipid metabolism; phospholipid metabolism. Catalyzes the reversible formation of acyl-phosphate (acyl-PO(4)) from acyl-[acyl-carrier-protein] (acyl-ACP). This enzyme utilizes acyl-ACP as fatty acyl donor, but not acyl-CoA. The protein is Phosphate acyltransferase of Campylobacter jejuni subsp. jejuni serotype O:2 (strain ATCC 700819 / NCTC 11168).